The following is a 592-amino-acid chain: BTB/POZ domain-containing protein At5g03250 (592 aa).

A BTB domain is found at 28-98 (SDVTIEVGDM…CYGVKIELTA (71 aa)). The 286-residue stretch at 217-502 (DWWFDDASFL…VQVLFFEQLR (286 aa)) folds into the NPH3 domain. Phosphotyrosine is present on Tyr443.

The protein belongs to the NPH3 family.

It functions in the pathway protein modification; protein ubiquitination. May act as a substrate-specific adapter of an E3 ubiquitin-protein ligase complex (CUL3-RBX1-BTB) which mediates the ubiquitination and subsequent proteasomal degradation of target proteins. This Arabidopsis thaliana (Mouse-ear cress) protein is BTB/POZ domain-containing protein At5g03250.